Consider the following 198-residue polypeptide: Cytochrome c oxidase assembly protein CtaG (198 aa).

The Cytoplasmic portion of the chain corresponds to 1–12 (MADNGQADRKER). The helical; Signal-anchor for type II membrane protein transmembrane segment at 13-35 (SNGVIVGTCLAFVAGMIGMAYAA) threads the bilayer. At 36 to 198 (VPLYDMFCRV…QVKAKAENKL (163 aa)) the chain is on the periplasmic side.

It belongs to the COX11/CtaG family.

The protein localises to the cell inner membrane. Functionally, exerts its effect at some terminal stage of cytochrome c oxidase synthesis, probably by being involved in the insertion of the copper B into subunit I. This chain is Cytochrome c oxidase assembly protein CtaG, found in Rhizobium meliloti (strain 1021) (Ensifer meliloti).